Reading from the N-terminus, the 367-residue chain is Peptide chain release factor 2 (367 aa).

The residue at position 254 (Q254) is an N5-methylglutamine.

It belongs to the prokaryotic/mitochondrial release factor family. Methylated by PrmC. Methylation increases the termination efficiency of RF2.

Its subcellular location is the cytoplasm. Peptide chain release factor 2 directs the termination of translation in response to the peptide chain termination codons UGA and UAA. This is Peptide chain release factor 2 from Leptospira interrogans serogroup Icterohaemorrhagiae serovar copenhageni (strain Fiocruz L1-130).